The chain runs to 161 residues: Nucleotide-binding protein SO_3815 (161 aa).

Belongs to the YajQ family.

Functionally, nucleotide-binding protein. This is Nucleotide-binding protein SO_3815 from Shewanella oneidensis (strain ATCC 700550 / JCM 31522 / CIP 106686 / LMG 19005 / NCIMB 14063 / MR-1).